Reading from the N-terminus, the 227-residue chain is UPF0173 metal-dependent hydrolase SSO0099 (227 aa).

Belongs to the UPF0173 family.

The sequence is that of UPF0173 metal-dependent hydrolase SSO0099 from Saccharolobus solfataricus (strain ATCC 35092 / DSM 1617 / JCM 11322 / P2) (Sulfolobus solfataricus).